A 499-amino-acid polypeptide reads, in one-letter code: Glycerol kinase (499 aa).

Residue threonine 12 participates in ADP binding. Residues threonine 12, threonine 13, and serine 14 each coordinate ATP. Threonine 12 serves as a coordination point for sn-glycerol 3-phosphate. Arginine 16 contributes to the ADP binding site. Sn-glycerol 3-phosphate is bound by residues arginine 82, glutamate 83, tyrosine 134, and aspartate 245. Glycerol-binding residues include arginine 82, glutamate 83, tyrosine 134, aspartate 245, and glutamine 246. ADP is bound by residues threonine 267 and glycine 311. ATP is bound by residues threonine 267, glycine 311, glutamine 315, and glycine 412. 2 residues coordinate ADP: glycine 412 and asparagine 416.

It belongs to the FGGY kinase family.

The catalysed reaction is glycerol + ATP = sn-glycerol 3-phosphate + ADP + H(+). Its pathway is polyol metabolism; glycerol degradation via glycerol kinase pathway; sn-glycerol 3-phosphate from glycerol: step 1/1. Its activity is regulated as follows. Inhibited by fructose 1,6-bisphosphate (FBP). Functionally, key enzyme in the regulation of glycerol uptake and metabolism. Catalyzes the phosphorylation of glycerol to yield sn-glycerol 3-phosphate. The sequence is that of Glycerol kinase from Acidiphilium cryptum (strain JF-5).